The chain runs to 210 residues: Large ribosomal subunit protein uL3 (210 aa).

A disordered region spans residues 120–143; that stretch reads FQGNIKKDGQSRGPMGHGSRYHRR.

The protein belongs to the universal ribosomal protein uL3 family. In terms of assembly, part of the 50S ribosomal subunit. Forms a cluster with proteins L14 and L19.

In terms of biological role, one of the primary rRNA binding proteins, it binds directly near the 3'-end of the 23S rRNA, where it nucleates assembly of the 50S subunit. This is Large ribosomal subunit protein uL3 from Latilactobacillus sakei subsp. sakei (strain 23K) (Lactobacillus sakei subsp. sakei).